The primary structure comprises 699 residues: Elongation factor G (699 aa).

The 276-residue stretch at 8 to 283 (EHIRNIGICA…AVVDFLPSPI (276 aa)) folds into the tr-type G domain. GTP contacts are provided by residues 17–24 (AHIDAGKT), 81–85 (DTPGH), and 135–138 (NKMD).

Belongs to the TRAFAC class translation factor GTPase superfamily. Classic translation factor GTPase family. EF-G/EF-2 subfamily.

The protein resides in the cytoplasm. Its function is as follows. Catalyzes the GTP-dependent ribosomal translocation step during translation elongation. During this step, the ribosome changes from the pre-translocational (PRE) to the post-translocational (POST) state as the newly formed A-site-bound peptidyl-tRNA and P-site-bound deacylated tRNA move to the P and E sites, respectively. Catalyzes the coordinated movement of the two tRNA molecules, the mRNA and conformational changes in the ribosome. This chain is Elongation factor G, found in Rickettsia helvetica.